The sequence spans 876 residues: AP-5 complex subunit beta-1 (876 aa).

As to quaternary structure, probably part of the adaptor protein complex 5 (AP-5), a tetramer composed of AP5B1, AP5M1, AP5S1 and AP5Z1. Interacts with ZFYVE26 and SPG11.

In terms of biological role, as part of AP-5, a probable fifth adaptor protein complex it may be involved in endosomal transport. The sequence is that of AP-5 complex subunit beta-1 (Ap5b1) from Mus musculus (Mouse).